Consider the following 470-residue polypeptide: Beta-Ala-Xaa dipeptidase (470 aa).

His87 lines the Zn(2+) pocket. Asp89 is a catalytic residue. Asp119 lines the Zn(2+) pocket. Residue Glu153 is the Proton acceptor of the active site. Residues Glu154 and Asp177 each coordinate Zn(2+). Arg350 is a substrate binding site. His439 lines the Zn(2+) pocket.

It belongs to the peptidase M20A family. Requires Zn(2+) as cofactor.

Its subcellular location is the cytoplasm. Its activity is regulated as follows. Fully inhibited by 1,10-phenanthroline or EDTA. Its function is as follows. Is a relatively unspecific dipeptidase cleaving a variety of dipeptides, notably those with an N-terminal beta-Ala or D-Ala residue, e.g. carnosine (beta-Ala-His). To a lesser extent, also shows aminopeptidase activity, since it is able to catalyze the removal of the N-terminal amino acid from a few distinct tripeptides. This chain is Beta-Ala-Xaa dipeptidase (pepV), found in Lactobacillus delbrueckii subsp. lactis.